A 461-amino-acid chain; its full sequence is tRNA(Ile)-lysidine synthase (461 aa).

ATP is bound at residue 26-31 (SGGPDS).

This sequence belongs to the tRNA(Ile)-lysidine synthase family.

The protein resides in the cytoplasm. It catalyses the reaction cytidine(34) in tRNA(Ile2) + L-lysine + ATP = lysidine(34) in tRNA(Ile2) + AMP + diphosphate + H(+). Its function is as follows. Ligates lysine onto the cytidine present at position 34 of the AUA codon-specific tRNA(Ile) that contains the anticodon CAU, in an ATP-dependent manner. Cytidine is converted to lysidine, thus changing the amino acid specificity of the tRNA from methionine to isoleucine. This chain is tRNA(Ile)-lysidine synthase, found in Clostridium acetobutylicum (strain ATCC 824 / DSM 792 / JCM 1419 / IAM 19013 / LMG 5710 / NBRC 13948 / NRRL B-527 / VKM B-1787 / 2291 / W).